Here is a 271-residue protein sequence, read N- to C-terminus: Putative F-box protein L165 (271 aa).

The 46-residue stretch at 4 to 49 (ICELFDDVILEIMNLLSDTDKINFMFCCSRFYYFIDLVYYNDIYDY) folds into the F-box domain. The interval 251 to 271 (NIPKIVPKNTHYRNSSKKYRY) is disordered. Residues 260–271 (THYRNSSKKYRY) show a composition bias toward basic residues.

The sequence is that of Putative F-box protein L165 from Acanthamoeba polyphaga mimivirus (APMV).